Here is a 182-residue protein sequence, read N- to C-terminus: uncharacterized protein (182 aa).

Disordered stretches follow at residues 1 to 73 and 105 to 182; these read MMSG…YRSL and SMST…HLNR. 2 stretches are compositionally biased toward low complexity: residues 43-68 and 105-121; these read RPSPFLSPSSSSSQTSISPTPTETSS and SMSTLELSSSTLSSPVT. The span at 122–131 shows a compositional bias: pro residues; the sequence is APAPPPPPTS.

This is an uncharacterized protein from Caenorhabditis elegans.